The chain runs to 792 residues: Protocadherin beta-18 (792 aa).

Positions 1–26 (MAARGSCVSRQRQVLFLFLLGGLCLA) are cleaved as a signal peptide. Cadherin domains lie at 27–133 (GSEL…SPIF), 134–242 (QDKK…APQF), 243–347 (PQEL…APEL), 348–451 (IMSS…APAF), 452–561 (NQTS…APFV), and 568–676 (ASAP…LPEV). N-linked (GlcNAc...) asparagine glycosylation is present at N169. N418 and N452 each carry an N-linked (GlcNAc...) asparagine glycan. The helical transmembrane segment at 693-713 (VIALASVSSLFLLSVLLFVGV) threads the bilayer.

Its subcellular location is the cell membrane. Its function is as follows. Potential calcium-dependent cell-adhesion protein. This chain is Protocadherin beta-18 (Pcdhb18), found in Mus musculus (Mouse).